A 316-amino-acid polypeptide reads, in one-letter code: CXXC-type zinc finger protein 5 (316 aa).

The span at 1 to 10 (MSSLGGGSQD) shows a compositional bias: gly residues. The disordered stretch occupies residues 1-95 (MSSLGGGSQD…SGGAGSMMGG (95 aa)). Low complexity-rich tracts occupy residues 11–27 (AGGS…SGSG) and 36–50 (SATV…VADD). Residues 250–291 (GKKKRKRCGMCAPCRRRINCEQCSSCRNRKTGHQICKFRKCE) form a CXXC-type zinc finger. Positions 251–256 (KKKRKR) match the Nuclear localization signal motif. The Zn(2+) site is built by Cys257, Cys260, Cys263, Cys269, Cys272, Cys275, Cys285, and Cys290.

Interacts with DVL1. Interacts with RBPJ. Expressed in neural stem cells (at protein level). Expressed in the dorsal telencephalon.

It is found in the nucleus. The protein resides in the cytoplasm. In terms of biological role, may indirectly participate in activation of the NF-kappa-B and MAPK pathways. Required for DNA damage-induced ATM phosphorylation, p53 activation and cell cycle arrest. Involved in myelopoiesis. Acts as a mediator of BMP4-mediated modulation of canonical Wnt signaling activity in neural stem cells. Binds to the oxygen responsive element of COX4I2 and represses its transcription under hypoxia conditions (4% oxygen), as well as normoxia conditions (20% oxygen). May repress COX4I2 transactivation induced by CHCHD2 and RBPJ. Binds preferentially to DNA containing cytidine-phosphate-guanosine (CpG) dinucleotides over CpH (H=A, T, and C), hemimethylated-CpG and hemimethylated-hydroxymethyl-CpG. The protein is CXXC-type zinc finger protein 5 (Cxxc5) of Rattus norvegicus (Rat).